The sequence spans 518 residues: GRIN2-like protein (518 aa).

2 disordered regions span residues 1–23 (MGLE…QSRT) and 467–500 (QTEP…FRTM). Residues 476–494 (KSDEDPLNKEPSSDKMEKK) show a composition bias toward basic and acidic residues.

As to quaternary structure, may interact with GNAO1.

May be involved in neurite outgrowth. The chain is GRIN2-like protein from Gallus gallus (Chicken).